The sequence spans 570 residues: Periplasmic trehalase (570 aa).

A signal peptide spans 1–34 (MIPPEIRRSVLLQKAIKLALAGTLLTFASFSATA). Substrate is bound by residues Arg-159, 166 to 167 (WD), Asn-203, 212 to 214 (RSQ), 284 to 286 (RPE), and Gly-317. Residues Asp-319 and Glu-503 each act as proton donor/acceptor in the active site. A substrate-binding site is contributed by Glu-518. Positions 544 to 570 (KPCDSVPSTRPASLSATPTKTPSAATQ) are disordered. Residues 554 to 570 (PASLSATPTKTPSAATQ) are compositionally biased toward low complexity.

The protein belongs to the glycosyl hydrolase 37 family. As to quaternary structure, monomer.

It is found in the periplasm. The catalysed reaction is alpha,alpha-trehalose + H2O = alpha-D-glucose + beta-D-glucose. Its function is as follows. Provides the cells with the ability to utilize trehalose at high osmolarity by splitting it into glucose molecules that can subsequently be taken up by the phosphotransferase-mediated uptake system. The polypeptide is Periplasmic trehalase (Salmonella typhimurium (strain LT2 / SGSC1412 / ATCC 700720)).